Reading from the N-terminus, the 339-residue chain is MVIVKSWQKIFALLVVLLLCIGCSKVPSTSYNPWAVVSLPTEAKLLDIAFTENPQHGFLVGSNATLLETNDGGNNWQPLNLALDDDRYRFDSVSFAGKEGWIAGEPSLLLHTTDEGRSWSRIPLSEKLPGNPIAIQALGTDIAEMATDVGAIYKTTDGGKNWKAQVEAAVGVVRNLERSEDGKYVAVSAKGSFYSTWEPGQNAWVPHNRNSSRRVENMGFSQDGLWLLARGGQVQFSDPTKPDEWLDAQTPELATSWGLLDMAYRTPNEVWIGGGSGNLLVSTDGGKTWEKDRDVEEVAANFYKVVFLKPDQGFVIGDRGVLLKYQPEAAKTATTEPAA.

The N-terminal stretch at 1–22 (MVIVKSWQKIFALLVVLLLCIG) is a signal peptide. C23 is lipidated: N-palmitoyl cysteine. The S-diacylglycerol cysteine moiety is linked to residue C23.

This sequence belongs to the Ycf48 family. Part of early PSII assembly complexes which includes D1 (psbA) and PsbI; not found in mature PSII. Binds to the lumenal side of PSII complexes. Interacts with YidC.

The protein resides in the cellular thylakoid membrane. In terms of biological role, a factor required for optimal assembly of photosystem II (PSII), acting in the early stages of PSII assembly. Also plays a role in replacement of photodamaged D1 (psbA). Assists YidC in synthesis of chlorophyll-binding proteins. In Trichormus variabilis (strain ATCC 29413 / PCC 7937) (Anabaena variabilis), this protein is Photosystem II assembly lipoprotein Ycf48.